A 365-amino-acid chain; its full sequence is Succinyl-diaminopimelate desuccinylase (365 aa).

Histidine 64 lines the Zn(2+) pocket. Residue aspartate 66 is part of the active site. Zn(2+) is bound at residue aspartate 95. Glutamate 125 acts as the Proton acceptor in catalysis. Glutamate 126, glutamate 154, and histidine 339 together coordinate Zn(2+).

The protein belongs to the peptidase M20A family. DapE subfamily. In terms of assembly, homodimer. It depends on Zn(2+) as a cofactor. Co(2+) is required as a cofactor.

The enzyme catalyses N-succinyl-(2S,6S)-2,6-diaminopimelate + H2O = (2S,6S)-2,6-diaminopimelate + succinate. It participates in amino-acid biosynthesis; L-lysine biosynthesis via DAP pathway; LL-2,6-diaminopimelate from (S)-tetrahydrodipicolinate (succinylase route): step 3/3. Functionally, catalyzes the hydrolysis of N-succinyl-L,L-diaminopimelic acid (SDAP), forming succinate and LL-2,6-diaminopimelate (DAP), an intermediate involved in the bacterial biosynthesis of lysine and meso-diaminopimelic acid, an essential component of bacterial cell walls. This is Succinyl-diaminopimelate desuccinylase from Sulfurimonas denitrificans (strain ATCC 33889 / DSM 1251) (Thiomicrospira denitrificans (strain ATCC 33889 / DSM 1251)).